The chain runs to 434 residues: ATP-sensitive inward rectifier potassium channel 14 (434 aa).

Residues 1–81 (MGLARALRRL…LSDLFTTCVD (81 aa)) lie on the Cytoplasmic side of the membrane. Cys79 bears the S-nitrosocysteine mark. A helical transmembrane segment spans residues 82–108 (VRWRWMCLLFSCSFLASWLLFGLTFWL). At 109–131 (IASLHGDLAAPPPPAPCFSQVAS) the chain is on the extracellular side. Positions 132-148 (FLAAFLFALETQTSIGY) form an intramembrane region, helical; Pore-forming. A Selectivity filter motif is present at residues 145–150 (SIGYGV). Residues 149–157 (GVRSVTEEC) lie on the Extracellular side of the membrane. A helical transmembrane segment spans residues 158 to 185 (PAAVAAVVLQCIAGCVLDAFVVGAVMAK). Residues 186 to 434 (MAKPKKRNET…TPTLALTLPP (249 aa)) are Cytoplasmic-facing. A disordered region spans residues 398–434 (QEEDEEEDTKEGTSAETPERAASPQALTPTLALTLPP). The span at 407–416 (KEGTSAETPE) shows a compositional bias: basic and acidic residues. Low complexity predominate over residues 418-434 (AASPQALTPTLALTLPP).

Belongs to the inward rectifier-type potassium channel (TC 1.A.2.1) family. KCNJ14 subfamily.

It is found in the membrane. The enzyme catalyses K(+)(in) = K(+)(out). With respect to regulation, channel activity is regulated by variations of cytosolic pH; channels are activated by alkaline and inhibited by acidic pH values. Inhibited by Ba(2+) and Cs(+) in a voltage-dependent manner; sensitivity to those inhibitors is lower than in other Kir channels. Inward rectifier potassium channels are characterized by a greater tendency to allow potassium to flow into the cell rather than out of it. Their voltage dependence is regulated by the concentration of extracellular potassium; as external potassium is raised, the voltage range of the channel opening shifts to more positive voltages. The chain is ATP-sensitive inward rectifier potassium channel 14 (Kcnj14) from Mus musculus (Mouse).